The chain runs to 258 residues: Acyl-[acyl-carrier-protein]--UDP-N-acetylglucosamine O-acyltransferase (258 aa).

It belongs to the transferase hexapeptide repeat family. LpxA subfamily. As to quaternary structure, homotrimer.

It is found in the cytoplasm. It carries out the reaction a (3R)-hydroxyacyl-[ACP] + UDP-N-acetyl-alpha-D-glucosamine = a UDP-3-O-[(3R)-3-hydroxyacyl]-N-acetyl-alpha-D-glucosamine + holo-[ACP]. It functions in the pathway glycolipid biosynthesis; lipid IV(A) biosynthesis; lipid IV(A) from (3R)-3-hydroxytetradecanoyl-[acyl-carrier-protein] and UDP-N-acetyl-alpha-D-glucosamine: step 1/6. In terms of biological role, involved in the biosynthesis of lipid A, a phosphorylated glycolipid that anchors the lipopolysaccharide to the outer membrane of the cell. This chain is Acyl-[acyl-carrier-protein]--UDP-N-acetylglucosamine O-acyltransferase, found in Thermodesulfovibrio yellowstonii (strain ATCC 51303 / DSM 11347 / YP87).